We begin with the raw amino-acid sequence, 176 residues long: Inner membrane-spanning protein YciB (176 aa).

Transmembrane regions (helical) follow at residues 3–23 (FLFD…WGIF), 24–44 (TATA…AFRH), 49–69 (TMLW…LVLH), 81–101 (LYWL…NNLI), 121–141 (VAWA…VHNF), and 149–169 (FKLF…SLWL).

The protein belongs to the YciB family.

It is found in the cell inner membrane. Its function is as follows. Plays a role in cell envelope biogenesis, maintenance of cell envelope integrity and membrane homeostasis. In Burkholderia lata (strain ATCC 17760 / DSM 23089 / LMG 22485 / NCIMB 9086 / R18194 / 383), this protein is Inner membrane-spanning protein YciB.